Here is a 444-residue protein sequence, read N- to C-terminus: Glutamyl-tRNA reductase (444 aa).

Residues 49 to 52 (TCNR), Ser109, 114 to 116 (ETQ), and Gln120 contribute to the substrate site. Catalysis depends on Cys50, which acts as the Nucleophile. 189–194 (GAGKMG) is a binding site for NADP(+).

This sequence belongs to the glutamyl-tRNA reductase family. As to quaternary structure, homodimer.

It catalyses the reaction (S)-4-amino-5-oxopentanoate + tRNA(Glu) + NADP(+) = L-glutamyl-tRNA(Glu) + NADPH + H(+). It functions in the pathway porphyrin-containing compound metabolism; protoporphyrin-IX biosynthesis; 5-aminolevulinate from L-glutamyl-tRNA(Glu): step 1/2. Catalyzes the NADPH-dependent reduction of glutamyl-tRNA(Glu) to glutamate 1-semialdehyde (GSA). This chain is Glutamyl-tRNA reductase, found in Bacillus cereus (strain ATCC 14579 / DSM 31 / CCUG 7414 / JCM 2152 / NBRC 15305 / NCIMB 9373 / NCTC 2599 / NRRL B-3711).